The primary structure comprises 34 residues: Putative protein YmiB (34 aa).

Residues 7 to 24 form a helical membrane-spanning segment; that stretch reads TAAKRIVFFIYLFVIQFW.

The protein resides in the membrane. This is Putative protein YmiB (ymiB) from Escherichia coli (strain K12).